The chain runs to 330 residues: Succinylglutamate desuccinylase (330 aa).

Residues His-53, Glu-56, and His-147 each contribute to the Zn(2+) site. Residue Glu-210 is part of the active site.

Belongs to the AspA/AstE family. Succinylglutamate desuccinylase subfamily. The cofactor is Zn(2+).

The enzyme catalyses N-succinyl-L-glutamate + H2O = L-glutamate + succinate. Its pathway is amino-acid degradation; L-arginine degradation via AST pathway; L-glutamate and succinate from L-arginine: step 5/5. Transforms N(2)-succinylglutamate into succinate and glutamate. The sequence is that of Succinylglutamate desuccinylase from Yersinia pseudotuberculosis serotype O:3 (strain YPIII).